We begin with the raw amino-acid sequence, 858 residues long: DNA replication licensing factor mcm4-A (858 aa).

The interval 1 to 125 is disordered; the sequence is MSSPTSTPSR…ARKVKQVDLH (125 aa). Polar residues-rich tracts occupy residues 54–68 and 79–94; these read SPSG…SSPA and LDLS…SSRV. The C4-type zinc-finger motif lies at 301–326; that stretch reads CQVCAFTTRVEIDRGRIAEPSVCKHC. Residues 453-662 enclose the MCM domain; it reads IYERLAAALA…YDRRLAHHLV (210 aa). Tyr-466, Arg-492, Lys-511, Ser-512, Asn-613, Arg-638, Arg-727, and Glu-730 together coordinate ATP. An Arginine finger motif is present at residues 637–640; sequence SRFD.

It belongs to the MCM family. As to quaternary structure, component of the mcm2-7 complex (RLF-M). The complex forms a toroidal hexameric ring with the proposed subunit order mcm2-mcm6-mcm4-mcm7-mcm3-mcm5. The heterodimer of mmcm3/mcm5 interacts with mcm4, mmcm6, mcm7 and weakly with mcm2. Component of the CMG helicase complex, composed of the mcm2-7 complex, the GINS complex and cdc45. Hyperphosphorylated during mitosis in a mechanism requiring cdc2-cyclin B and other kinases. Undergoes dephosphorylation after exiting mitosis, existing in a partially phosphorylated state in the cytosolic interphase mcm complex which associates with the pre-replication complexes (pre-Rcs). Complete dephosphorylation inactivates the mcm complex, preventing its binding to chromatin. Becomes actively phosphorylated during S phase once the mcm complex is assembled on the chromatin. This chromatin-associated phosphorylation occurs during the activation of the pre-Rcs and is independent of cdks. Phosphorylated by the cdc7-dbf4b complex.

The protein resides in the nucleus. It localises to the chromosome. The catalysed reaction is ATP + H2O = ADP + phosphate + H(+). Its function is as follows. Acts as a component of the MCM2-7 complex (MCM complex) which is the replicative helicase essential for 'once per cell cycle' DNA replication initiation and elongation in eukaryotic cells. Core component of CDC45-MCM-GINS (CMG) helicase, the molecular machine that unwinds template DNA during replication, and around which the replisome is built. The active ATPase sites in the MCM2-7 ring are formed through the interaction surfaces of two neighboring subunits such that a critical structure of a conserved arginine finger motif is provided in trans relative to the ATP-binding site of the Walker A box of the adjacent subunit. The six ATPase active sites, however, are likely to contribute differentially to the complex helicase activity. The polypeptide is DNA replication licensing factor mcm4-A (mcm4-a) (Xenopus laevis (African clawed frog)).